The sequence spans 344 residues: MPITEQEALLRCIDHREIFHDEMLHLFRKIMSGEMSPVMIAALTMGLRVKKESIGEIAAAAQVMREFSTKVPLTDTTNLLDIVGTGGDGANTFNISTASMFVAASAGARIAKHGGRSVSSSSGSADVLESLGANINLKPELVAESIAQTGIGFMFAPNHHAAMKHAAPVRKELGVRTIFNILGPLTNPAGAPNILMGVFHPDLVGIQVRVLQRLGAQHAIVVWGRDNMDEVSLGAATMVGELVNGEIREYEIHPEDFGLQMIASRNLKVANSVESKAKIFEALDNVDSPARDIVALNAGTALYAAGVASSIADGLAKARAAIASGAARAKLEQFVQVTQALGKA.

5-phospho-alpha-D-ribose 1-diphosphate is bound by residues G84, 87–88, T92, 94–97, 112–120, and S124; these read GD, NIST, and KHGGRSVSS. G84 serves as a coordination point for anthranilate. Residue S96 coordinates Mg(2+). Anthranilate is bound at residue R170. Residues D229 and E230 each coordinate Mg(2+).

It belongs to the anthranilate phosphoribosyltransferase family. Homodimer. Mg(2+) serves as cofactor.

It carries out the reaction N-(5-phospho-beta-D-ribosyl)anthranilate + diphosphate = 5-phospho-alpha-D-ribose 1-diphosphate + anthranilate. It participates in amino-acid biosynthesis; L-tryptophan biosynthesis; L-tryptophan from chorismate: step 2/5. In terms of biological role, catalyzes the transfer of the phosphoribosyl group of 5-phosphorylribose-1-pyrophosphate (PRPP) to anthranilate to yield N-(5'-phosphoribosyl)-anthranilate (PRA). This chain is Anthranilate phosphoribosyltransferase, found in Janthinobacterium sp. (strain Marseille) (Minibacterium massiliensis).